The following is a 406-amino-acid chain: Elongation factor Tu-B (406 aa).

The tr-type G domain maps to 10–215; the sequence is KPHVNVGTIG…AIDEYIPTPV (206 aa). The G1 stretch occupies residues 19 to 26; sequence GHVDHGKT. 19 to 26 contacts GTP; the sequence is GHVDHGKT. Thr-26 provides a ligand contact to Mg(2+). The segment at 61–65 is G2; it reads GITIN. The tract at residues 82–85 is G3; it reads DCPG. Residues 82-86 and 137-140 each bind GTP; these read DCPGH and NKVD. The interval 137-140 is G4; sequence NKVD. A G5 region spans residues 175-177; sequence SAL. Thr-395 bears the Phosphothreonine mark.

This sequence belongs to the TRAFAC class translation factor GTPase superfamily. Classic translation factor GTPase family. EF-Tu/EF-1A subfamily. Monomer. Post-translationally, phosphorylated on a threonine.

It localises to the cytoplasm. It carries out the reaction GTP + H2O = GDP + phosphate + H(+). GTP hydrolase that promotes the GTP-dependent binding of aminoacyl-tRNA to the A-site of ribosomes during protein biosynthesis. Functionally, protects glycyl-tRNA(Gly) from hydrolysis by E.coli D-aminoacyl-tRNA deacylase (dtd). In Thermus thermophilus (strain ATCC 27634 / DSM 579 / HB8), this protein is Elongation factor Tu-B.